Reading from the N-terminus, the 663-residue chain is UvrABC system protein B (663 aa).

A Helicase ATP-binding domain is found at 30–417 (EGIKAGKRHQ…TDKMVEQIIR (388 aa)). ATP is bound at residue 43–50 (GATGTGKT). A Beta-hairpin motif is present at residues 96-119 (YYDYYQPEAYVPSTDTFIEKDASI). The Helicase C-terminal domain occupies 434–600 (QIDDLLSEIQ…TINKKIHDLI (167 aa)). In terms of domain architecture, UVR spans 627–662 (QKTIDNIEKEMKQAAKDLDFEKATELRDMLFELKAE).

It belongs to the UvrB family. Forms a heterotetramer with UvrA during the search for lesions. Interacts with UvrC in an incision complex.

The protein localises to the cytoplasm. Functionally, the UvrABC repair system catalyzes the recognition and processing of DNA lesions. A damage recognition complex composed of 2 UvrA and 2 UvrB subunits scans DNA for abnormalities. Upon binding of the UvrA(2)B(2) complex to a putative damaged site, the DNA wraps around one UvrB monomer. DNA wrap is dependent on ATP binding by UvrB and probably causes local melting of the DNA helix, facilitating insertion of UvrB beta-hairpin between the DNA strands. Then UvrB probes one DNA strand for the presence of a lesion. If a lesion is found the UvrA subunits dissociate and the UvrB-DNA preincision complex is formed. This complex is subsequently bound by UvrC and the second UvrB is released. If no lesion is found, the DNA wraps around the other UvrB subunit that will check the other stand for damage. This chain is UvrABC system protein B, found in Staphylococcus aureus (strain COL).